The following is a 248-amino-acid chain: 5'-nucleotidase SurE (248 aa).

A divalent metal cation is bound by residues Asp-8, Asp-9, Ser-39, and Asn-91.

This sequence belongs to the SurE nucleotidase family. It depends on a divalent metal cation as a cofactor.

It localises to the cytoplasm. It catalyses the reaction a ribonucleoside 5'-phosphate + H2O = a ribonucleoside + phosphate. Nucleotidase that shows phosphatase activity on nucleoside 5'-monophosphates. The sequence is that of 5'-nucleotidase SurE from Geobacter sp. (strain M21).